A 297-amino-acid chain; its full sequence is Iron-sulfur cluster assembly SufBD family protein ycf24 (297 aa).

This sequence belongs to the iron-sulfur cluster assembly SufBD family.

Its subcellular location is the plastid. It is found in the chloroplast. In Antithamnion sp. (Red alga), this protein is Iron-sulfur cluster assembly SufBD family protein ycf24 (ycf24).